Consider the following 579-residue polypeptide: Matrix metalloproteinase-C (579 aa).

An N-terminal signal peptide occupies residues 1–17 (MRLIYVIAILLVSTCQA). The propeptide at 18 to 129 (GFFSSLVSRF…SRCGVTDAPL (112 aa)) is activation peptide. A disordered region spans residues 32–51 (NSSPSSSSSSSSFSNSRKPS). Over residues 33–50 (SSPSSSSSSSSFSNSRKP) the composition is skewed to low complexity. Positions 120–127 (SRCGVTDA) match the Cysteine switch motif. Cys-122, His-200, Asp-202, His-215, and His-225 together coordinate Zn(2+). The N-linked (GlcNAc...) asparagine glycan is linked to Asn-231. His-254 is a Zn(2+) binding site. Residue Glu-255 is part of the active site. Zn(2+)-binding residues include His-258 and His-264. The segment at 307–394 (SGRSSSGSDF…SSSGSSGGGC (88 aa)) is disordered. Positions 315–324 (DFGGSSGGGS) are enriched in gly residues. Residues 325 to 341 (RTTARPTTTTRSWFGRF) show a composition bias toward low complexity. The span at 373 to 394 (WGSGSGSSGRGGSSSGSSGGGC) shows a compositional bias: gly residues. Hemopexin repeat units lie at residues 395–437 (PSHI…FPSA) and 438–490 (PTPV…LGFS).

It belongs to the peptidase M10A family. Requires Zn(2+) as cofactor.

Its subcellular location is the secreted. The protein localises to the extracellular space. It localises to the extracellular matrix. Its activity is regulated as follows. Inhibited by human TIMP1 and TIMP2 and the broad MMP inhibitors BB94 (Batimastat) and CT543. Metalloproteinase. This is Matrix metalloproteinase-C from Caenorhabditis elegans.